Consider the following 149-residue polypeptide: MTKGQRHIKIRELITSHEIETQDDLVDMLREEGYKVTQATVSRDIKELHLVKVPTNNGSYKYSLPADQRFNPLSKLKRSLMDAFVKIDSASHMIVLKTMPGNAQAIGALMDNLEWEEIMGTICGDDTILIICRTPEDTEGVQSRLLELL.

It belongs to the ArgR family.

The protein localises to the cytoplasm. It functions in the pathway amino-acid biosynthesis; L-arginine biosynthesis [regulation]. Its function is as follows. Regulates arginine biosynthesis genes. This is Arginine repressor from Bacillus velezensis (strain DSM 23117 / BGSC 10A6 / LMG 26770 / FZB42) (Bacillus amyloliquefaciens subsp. plantarum).